The chain runs to 195 residues: Nucleoside triphosphate pyrophosphatase (195 aa).

The active-site Proton acceptor is D76.

The protein belongs to the Maf family. It depends on a divalent metal cation as a cofactor.

Its subcellular location is the cytoplasm. The enzyme catalyses a ribonucleoside 5'-triphosphate + H2O = a ribonucleoside 5'-phosphate + diphosphate + H(+). It carries out the reaction a 2'-deoxyribonucleoside 5'-triphosphate + H2O = a 2'-deoxyribonucleoside 5'-phosphate + diphosphate + H(+). In terms of biological role, nucleoside triphosphate pyrophosphatase. May have a dual role in cell division arrest and in preventing the incorporation of modified nucleotides into cellular nucleic acids. The chain is Nucleoside triphosphate pyrophosphatase from Pelagibacter ubique (strain HTCC1062).